Reading from the N-terminus, the 301-residue chain is Ribonuclease HIII (301 aa).

The RNase H type-2 domain maps to 88 to 301 (WSVLGSDEVG…TQKARQLARQ (214 aa)). 3 residues coordinate a divalent metal cation: Asp94, Glu95, and Asp197.

Belongs to the RNase HII family. RnhC subfamily. It depends on Mn(2+) as a cofactor. The cofactor is Mg(2+).

It localises to the cytoplasm. The enzyme catalyses Endonucleolytic cleavage to 5'-phosphomonoester.. Endonuclease that specifically degrades the RNA of RNA-DNA hybrids. In Limosilactobacillus fermentum (strain NBRC 3956 / LMG 18251) (Lactobacillus fermentum), this protein is Ribonuclease HIII.